Here is a 205-residue protein sequence, read N- to C-terminus: Ribosomal RNA large subunit methyltransferase E (205 aa).

Residues glycine 50, tryptophan 52, aspartate 67, asparagine 83, and aspartate 111 each contribute to the S-adenosyl-L-methionine site. The Proton acceptor role is filled by lysine 151.

The protein belongs to the class I-like SAM-binding methyltransferase superfamily. RNA methyltransferase RlmE family.

Its subcellular location is the cytoplasm. It catalyses the reaction uridine(2552) in 23S rRNA + S-adenosyl-L-methionine = 2'-O-methyluridine(2552) in 23S rRNA + S-adenosyl-L-homocysteine + H(+). Specifically methylates the uridine in position 2552 of 23S rRNA at the 2'-O position of the ribose in the fully assembled 50S ribosomal subunit. The sequence is that of Ribosomal RNA large subunit methyltransferase E from Thermoplasma acidophilum (strain ATCC 25905 / DSM 1728 / JCM 9062 / NBRC 15155 / AMRC-C165).